A 567-amino-acid polypeptide reads, in one-letter code: Malate synthase (567 aa).

Catalysis depends on arginine 177, which acts as the Proton acceptor. Aspartate 466 (proton donor) is an active-site residue. The Microbody targeting signal signature appears at 565 to 567; that stretch reads CKL.

The protein belongs to the malate synthase family.

Its subcellular location is the glyoxysome. It carries out the reaction glyoxylate + acetyl-CoA + H2O = (S)-malate + CoA + H(+). It functions in the pathway carbohydrate metabolism; glyoxylate cycle; (S)-malate from isocitrate: step 2/2. This chain is Malate synthase, found in Oryza sativa subsp. japonica (Rice).